Reading from the N-terminus, the 103-residue chain is N(4)-acetylcytidine amidohydrolase (103 aa).

An ASCH domain is found at 6–101 (ITFFQRFQDD…QIQFYVIEFK (96 aa)). Residue Lys-21 is the Proton acceptor of the active site. Thr-24 serves as the catalytic Nucleophile. Glu-74 (proton donor) is an active-site residue.

This sequence belongs to the N(4)-acetylcytidine amidohydrolase family.

The enzyme catalyses N(4)-acetylcytidine + H2O = cytidine + acetate + H(+). It carries out the reaction N(4)-acetyl-2'-deoxycytidine + H2O = 2'-deoxycytidine + acetate + H(+). The catalysed reaction is N(4)-acetylcytosine + H2O = cytosine + acetate + H(+). Catalyzes the hydrolysis of N(4)-acetylcytidine (ac4C). This Escherichia coli (strain SMS-3-5 / SECEC) protein is N(4)-acetylcytidine amidohydrolase (yqfB).